The following is a 376-amino-acid chain: 23S rRNA (uracil(747)-C(5))-methyltransferase RlmC (376 aa).

[4Fe-4S] cluster-binding residues include Cys3, Cys11, Cys14, and Cys87. 4 residues coordinate S-adenosyl-L-methionine: Gln212, Phe241, Glu262, and Asn307. Cys334 serves as the catalytic Nucleophile.

It belongs to the class I-like SAM-binding methyltransferase superfamily. RNA M5U methyltransferase family. RlmC subfamily.

It carries out the reaction uridine(747) in 23S rRNA + S-adenosyl-L-methionine = 5-methyluridine(747) in 23S rRNA + S-adenosyl-L-homocysteine + H(+). Its function is as follows. Catalyzes the formation of 5-methyl-uridine at position 747 (m5U747) in 23S rRNA. The sequence is that of 23S rRNA (uracil(747)-C(5))-methyltransferase RlmC from Yersinia pestis bv. Antiqua (strain Antiqua).